Here is a 358-residue protein sequence, read N- to C-terminus: 1-deoxy-D-xylulose 5-phosphate reductoisomerase (358 aa).

Thr7, Gly8, Ser9, Ile10, Gly31, Asn33, and Asn114 together coordinate NADPH. Lys115 provides a ligand contact to 1-deoxy-D-xylulose 5-phosphate. Glu116 provides a ligand contact to NADPH. Asp134 is a binding site for Mn(2+). Positions 135, 136, 157, and 180 each coordinate 1-deoxy-D-xylulose 5-phosphate. Residue Glu136 participates in Mn(2+) binding. Gly186 contributes to the NADPH binding site. Residues Ser193, Asn198, Lys199, and Glu202 each coordinate 1-deoxy-D-xylulose 5-phosphate. Mn(2+) is bound at residue Glu202.

Belongs to the DXR family. It depends on Mg(2+) as a cofactor. The cofactor is Mn(2+).

The enzyme catalyses 2-C-methyl-D-erythritol 4-phosphate + NADP(+) = 1-deoxy-D-xylulose 5-phosphate + NADPH + H(+). It functions in the pathway isoprenoid biosynthesis; isopentenyl diphosphate biosynthesis via DXP pathway; isopentenyl diphosphate from 1-deoxy-D-xylulose 5-phosphate: step 1/6. In terms of biological role, catalyzes the NADPH-dependent rearrangement and reduction of 1-deoxy-D-xylulose-5-phosphate (DXP) to 2-C-methyl-D-erythritol 4-phosphate (MEP). The polypeptide is 1-deoxy-D-xylulose 5-phosphate reductoisomerase (Wolinella succinogenes (strain ATCC 29543 / DSM 1740 / CCUG 13145 / JCM 31913 / LMG 7466 / NCTC 11488 / FDC 602W) (Vibrio succinogenes)).